Here is a 418-residue protein sequence, read N- to C-terminus: Protein SSXT (418 aa).

S2 bears the N-acetylserine mark. Residues 2–186 (SVAFAAPRQR…NQMTMSQGQP (185 aa)) form a transcriptional activation region. The SH2-binding signature appears at 50–53 (YQQM). 2 disordered regions span residues 77-118 (APPT…PAPH) and 188-418 (GNYG…NYQQ). Low complexity predominate over residues 225-251 (YQGQQPPMGMMGQVNQGNHMMGQRQIP). Basic and acidic residues predominate over residues 309-318 (GYDRPYEDSS). 3 stretches are compositionally biased toward low complexity: residues 328–337 (QYGQQQDAYQ), 345–366 (YPPQ…QGYG), and 376–393 (YPNY…YRPT). 2 consecutive repeat copies span residues 344 to 356 (GYPP…PGQQ) and 357 to 369 (GYPG…GPSQ). The segment at 344-369 (GYPPQQQQYPGQQGYPGQQQGYGPSQ) is 2 X 13 AA imperfect tandem repeats. The short motif at 374-377 (PQYP) is the SH2-binding element. The SH3-binding signature appears at 392–401 (PTQPGPPQPP). Over residues 394–403 (QPGPPQPPQQ) the composition is skewed to pro residues. Residues 404–418 (RPYGYDQGQYGNYQQ) are compositionally biased toward low complexity. The SH2-binding motif lies at 413–416 (YGNY).

The protein belongs to the SS18 family. As to quaternary structure, interacts with MLLT10. Isoform 1 interacts with RBM14 isoform 1. Isoform 2 interacts with RBM14 isoform 1. Component of the multiprotein chromatin-remodeling complexes SWI/SNF: SWI/SNF-A (BAF), SWI/SNF-B (PBAF) and related complexes. The canonical complex contains a catalytic subunit (either SMARCA4/BRG1/BAF190A or SMARCA2/BRM/BAF190B) and at least SMARCE1, ACTL6A/BAF53, SMARCC1/BAF155, SMARCC2/BAF170, and SMARCB1/SNF5/BAF47. Other subunits specific to each of the complexes may also be present permitting several possible combinations developmentally and tissue specific. Component of the SWI/SNF (GBAF) subcomplex, which includes at least BICRA or BICRAL (mutually exclusive), BRD9, SS18, the core BAF subunits, SMARCA2/BRM, SMARCA4/BRG1/BAF190A, ACTL6A/BAF53, SMARCC1/BAF155, and SMARCD1/BAF60A. Fairly ubiquitously expressed. Expressed in synovial sarcomas and in other human cell lines. The fusion genes SSXT-SSX1 and SSXT-SSX2 are expressed only in synovial sarcomas.

The protein localises to the nucleus. Appears to function synergistically with RBM14 as a transcriptional coactivator. Isoform 1 and isoform 2 function in nuclear receptor coactivation. Isoform 1 and isoform 2 function in general transcriptional coactivation. Component of SWI/SNF chromatin remodeling subcomplex GBAF that carries out key enzymatic activities, changing chromatin structure by altering DNA-histone contacts within a nucleosome in an ATP-dependent manner. This is Protein SSXT (SS18) from Homo sapiens (Human).